Consider the following 166-residue polypeptide: Methylmalonyl-CoA epimerase, mitochondrial (166 aa).

The transit peptide at 1 to 23 directs the protein to the mitochondrion; sequence MFKQLIKTTLTNSRSFSTNTGSG. Residues 37–166 form the VOC domain; that stretch reads KLNHVAIATP…NGVLVELEEK (130 aa). Residues His40, His112, and Glu162 each coordinate Co(2+).

This sequence belongs to the methylmalonyl-CoA epimerase family.

Its subcellular location is the mitochondrion. The enzyme catalyses (R)-methylmalonyl-CoA = (S)-methylmalonyl-CoA. Functionally, methylmalonyl-CoA epimerase involved in propionyl-CoA metabolism. The sequence is that of Methylmalonyl-CoA epimerase, mitochondrial (mcee) from Dictyostelium discoideum (Social amoeba).